Consider the following 338-residue polypeptide: MKVFYDKDADLSLIKGKNVTIIGYGSQGHAHAQNLNDSGVKVTVGLRRGGASWAKVEKAGLKVAEVADAVKSADVVMMLLPDEQIAAVYNAEVAPNMKEGASLAFAHGFNVHYGQVVPRADVDVWMVAPKAPGHTVRNTYTQGGGVPHLIAVHADKTGKARDLALSYAAANGGGKAGIIETNFREETETDLFGEQAVLCGGTVELIKAGFETLVEAGYAPEMAYFECLHELKLIVDLIYEGGIANMNYSISNNAEYGEYVTGPRVVTAATKDAMRQCLKDIQTGEYAKSFILENKAGAPTLISRRRLTEEHQIEVVGEKLRAMMPWIKANKLVDKSRN.

The KARI N-terminal Rossmann domain maps to 1 to 181; the sequence is MKVFYDKDAD…GGGKAGIIET (181 aa). Residues 24–27, R47, and S52 each bind NADP(+); that span reads YGSQ. Residue H107 is part of the active site. Residue G133 coordinates NADP(+). The KARI C-terminal knotted domain maps to 182-327; sequence NFREETETDL…EKLRAMMPWI (146 aa). Mg(2+)-binding residues include D190, E194, E226, and E230. S251 lines the substrate pocket.

It belongs to the ketol-acid reductoisomerase family. The cofactor is Mg(2+).

The enzyme catalyses (2R)-2,3-dihydroxy-3-methylbutanoate + NADP(+) = (2S)-2-acetolactate + NADPH + H(+). It carries out the reaction (2R,3R)-2,3-dihydroxy-3-methylpentanoate + NADP(+) = (S)-2-ethyl-2-hydroxy-3-oxobutanoate + NADPH + H(+). It functions in the pathway amino-acid biosynthesis; L-isoleucine biosynthesis; L-isoleucine from 2-oxobutanoate: step 2/4. Its pathway is amino-acid biosynthesis; L-valine biosynthesis; L-valine from pyruvate: step 2/4. Its function is as follows. Involved in the biosynthesis of branched-chain amino acids (BCAA). Catalyzes an alkyl-migration followed by a ketol-acid reduction of (S)-2-acetolactate (S2AL) to yield (R)-2,3-dihydroxy-isovalerate. In the isomerase reaction, S2AL is rearranged via a Mg-dependent methyl migration to produce 3-hydroxy-3-methyl-2-ketobutyrate (HMKB). In the reductase reaction, this 2-ketoacid undergoes a metal-dependent reduction by NADPH to yield (R)-2,3-dihydroxy-isovalerate. The polypeptide is Ketol-acid reductoisomerase (NADP(+)) (Leptothrix cholodnii (strain ATCC 51168 / LMG 8142 / SP-6) (Leptothrix discophora (strain SP-6))).